The chain runs to 121 residues: Flagellar protein FliT (121 aa).

The required for homodimerization stretch occupies residues M1–L50. A fliD binding region spans residues M60 to V98.

Belongs to the FliT family. In terms of assembly, homodimer. Interacts with FliD and FlhC.

The protein resides in the cytoplasm. It localises to the cytosol. In terms of biological role, dual-function protein that regulates the transcription of class 2 flagellar operons and that also acts as an export chaperone for the filament-capping protein FliD. As a transcriptional regulator, acts as an anti-FlhDC factor; it directly binds FlhC, thus inhibiting the binding of the FlhC/FlhD complex to class 2 promoters, resulting in decreased expression of class 2 flagellar operons. As a chaperone, effects FliD transition to the membrane by preventing its premature polymerization, and by directing it to the export apparatus. This is Flagellar protein FliT from Escherichia coli O17:K52:H18 (strain UMN026 / ExPEC).